Here is a 106-residue protein sequence, read N- to C-terminus: Nucleoid-associated protein Fjoh_2555 (106 aa).

The protein belongs to the YbaB/EbfC family. In terms of assembly, homodimer.

Its subcellular location is the cytoplasm. The protein localises to the nucleoid. Its function is as follows. Binds to DNA and alters its conformation. May be involved in regulation of gene expression, nucleoid organization and DNA protection. This Flavobacterium johnsoniae (strain ATCC 17061 / DSM 2064 / JCM 8514 / BCRC 14874 / CCUG 350202 / NBRC 14942 / NCIMB 11054 / UW101) (Cytophaga johnsonae) protein is Nucleoid-associated protein Fjoh_2555.